Here is a 251-residue protein sequence, read N- to C-terminus: UPF0246 protein TM1040_2658 (251 aa).

Belongs to the UPF0246 family.

This is UPF0246 protein TM1040_2658 from Ruegeria sp. (strain TM1040) (Silicibacter sp.).